The sequence spans 175 residues: MEVPTLELKKFIRDIPDFPEKGIIFRDITPLLKNPEAFNFAIDQLVNKLKEIEFNTIVAPEARGFIFGGALAYKLGKGLVPVRKPGKLPYKVISEKYSLEYGEAELQMHIDAISQGEKVIIFDDVLATGGTALALKKLVEKAGGEVVSMAFLIELTYLNPRKLLSKENIISLITY.

This sequence belongs to the purine/pyrimidine phosphoribosyltransferase family. In terms of assembly, homodimer.

It localises to the cytoplasm. It carries out the reaction AMP + diphosphate = 5-phospho-alpha-D-ribose 1-diphosphate + adenine. Its pathway is purine metabolism; AMP biosynthesis via salvage pathway; AMP from adenine: step 1/1. Its function is as follows. Catalyzes a salvage reaction resulting in the formation of AMP, that is energically less costly than de novo synthesis. The chain is Adenine phosphoribosyltransferase from Thermosipho melanesiensis (strain DSM 12029 / CIP 104789 / BI429).